A 626-amino-acid chain; its full sequence is Probable serine/threonine-protein kinase CCRP1 (626 aa).

Residues 36–291 (YSKGRMLGKG…LDEILQHPFL (256 aa)) enclose the Protein kinase domain. ATP is bound by residues 42–50 (LGKGGFAKC) and Lys65. Position 71 is a phosphoserine (Ser71). Asp159 serves as the catalytic Proton acceptor. The interval 399 to 433 (NFTKTGSWQSNLNGTQSVKGSSRPQTVQQKGDLKS) is disordered. Positions 400 to 427 (FTKTGSWQSNLNGTQSVKGSSRPQTVQQ) are enriched in polar residues. 2 POLO box domains span residues 471–554 (WVKK…YLEG) and 574–626 (YVKK…PISP).

This sequence belongs to the protein kinase superfamily. Ser/Thr protein kinase family. CDC5/Polo subfamily. Embryo.

It catalyses the reaction L-seryl-[protein] + ATP = O-phospho-L-seryl-[protein] + ADP + H(+). The catalysed reaction is L-threonyl-[protein] + ATP = O-phospho-L-threonyl-[protein] + ADP + H(+). May play a role in the division of some cell types. This chain is Probable serine/threonine-protein kinase CCRP1 (CCRP1), found in Zea mays (Maize).